The following is a 179-amino-acid chain: Large ribosomal subunit protein uL6 (179 aa).

This sequence belongs to the universal ribosomal protein uL6 family. As to quaternary structure, part of the 50S ribosomal subunit.

Functionally, this protein binds to the 23S rRNA, and is important in its secondary structure. It is located near the subunit interface in the base of the L7/L12 stalk, and near the tRNA binding site of the peptidyltransferase center. This Koribacter versatilis (strain Ellin345) protein is Large ribosomal subunit protein uL6.